Consider the following 56-residue polypeptide: Photosystem II reaction center protein K (56 aa).

Positions 1 to 19 (MFNIFLDDAFIHSNNPFFG) are excised as a propeptide. A helical transmembrane segment spans residues 35-55 (MPIIPVLSFLLAFVWQAAVSF).

This sequence belongs to the PsbK family. In terms of assembly, PSII is composed of 1 copy each of membrane proteins PsbA, PsbB, PsbC, PsbD, PsbE, PsbF, PsbH, PsbI, PsbJ, PsbK, PsbL, PsbM, PsbT, PsbX, PsbY, PsbZ, Psb30/Ycf12, at least 3 peripheral proteins of the oxygen-evolving complex and a large number of cofactors. It forms dimeric complexes.

It is found in the plastid. It localises to the chloroplast thylakoid membrane. Functionally, one of the components of the core complex of photosystem II (PSII). PSII is a light-driven water:plastoquinone oxidoreductase that uses light energy to abstract electrons from H(2)O, generating O(2) and a proton gradient subsequently used for ATP formation. It consists of a core antenna complex that captures photons, and an electron transfer chain that converts photonic excitation into a charge separation. The protein is Photosystem II reaction center protein K of Pinus thunbergii (Japanese black pine).